We begin with the raw amino-acid sequence, 130 residues long: Small ribosomal subunit protein uS11 (130 aa).

This sequence belongs to the universal ribosomal protein uS11 family. As to quaternary structure, part of the 30S ribosomal subunit. Interacts with proteins S7 and S18. Binds to IF-3.

Its function is as follows. Located on the platform of the 30S subunit, it bridges several disparate RNA helices of the 16S rRNA. Forms part of the Shine-Dalgarno cleft in the 70S ribosome. This chain is Small ribosomal subunit protein uS11, found in Thermoanaerobacter sp. (strain X514).